The chain runs to 429 residues: D-amino acid dehydrogenase (429 aa).

3–17 (VLILGSGVIGTTTAW) contributes to the FAD binding site.

Belongs to the DadA oxidoreductase family. Requires FAD as cofactor.

It carries out the reaction a D-alpha-amino acid + A + H2O = a 2-oxocarboxylate + AH2 + NH4(+). Its pathway is amino-acid degradation; D-alanine degradation; NH(3) and pyruvate from D-alanine: step 1/1. Functionally, oxidative deamination of D-amino acids. This chain is D-amino acid dehydrogenase, found in Xanthomonas campestris pv. campestris (strain B100).